The chain runs to 787 residues: Exocyst complex component SEC15B (787 aa).

This sequence belongs to the SEC15 family. As to quaternary structure, the exocyst complex is composed of SEC3, SEC5, SEC6, SEC8, SEC10, EXO70A1 and EXO84B. Interacts with EXO84B. Binds to EXO70H1 AND EXO70B2. Binds directly to B1L.

Its subcellular location is the cytoplasm. It localises to the cytosol. The protein localises to the cytoskeleton. It is found in the phragmoplast. The protein resides in the secreted. Its subcellular location is the cell wall. It localises to the extracellular exosome. Functionally, component of the exocyst complex involved in the docking of exocytic vesicles with fusion sites on the plasma membrane during regulated or polarized secretion. Involved in polarized cell growth and organ morphogenesis. During cytokinesis, involved in cell plate initiation, cell plate maturation and formation of new primary cell wall. The chain is Exocyst complex component SEC15B from Arabidopsis thaliana (Mouse-ear cress).